The chain runs to 219 residues: Auxin-responsive protein IAA24 (219 aa).

The short motif at 24 to 28 (LCLRL) is the EAR-like (transcriptional repression) element. 2 disordered regions span residues 24–88 (LCLR…AKAQ) and 109–128 (AAAA…QQGG). A compositionally biased stretch (polar residues) spans 60 to 71 (STDSMASGTGTS). Residues 129–215 (GLYVKVSMDG…SCKKLRIMKG (87 aa)) enclose the PB1 domain.

The protein belongs to the Aux/IAA family. In terms of assembly, homodimers and heterodimers. In terms of tissue distribution, highly expressed in flowers. Expressed in seedlings.

The protein localises to the nucleus. Aux/IAA proteins are short-lived transcriptional factors that function as repressors of early auxin response genes at low auxin concentrations. This Oryza sativa subsp. japonica (Rice) protein is Auxin-responsive protein IAA24 (IAA24).